The sequence spans 139 residues: S-adenosylmethionine decarboxylase proenzyme (139 aa).

The active-site Schiff-base intermediate with substrate; via pyruvic acid is S63. At S63 the chain carries Pyruvic acid (Ser); by autocatalysis. The active-site Proton acceptor; for processing activity is the H68. The active-site Proton donor; for catalytic activity is the C83.

It belongs to the prokaryotic AdoMetDC family. Type 1 subfamily. Heterotetramer of two alpha and two beta chains arranged as a dimer of alpha/beta heterodimers. Pyruvate is required as a cofactor. Post-translationally, is synthesized initially as an inactive proenzyme. Formation of the active enzyme involves a self-maturation process in which the active site pyruvoyl group is generated from an internal serine residue via an autocatalytic post-translational modification. Two non-identical subunits are generated from the proenzyme in this reaction, and the pyruvate is formed at the N-terminus of the alpha chain, which is derived from the carboxyl end of the proenzyme. The post-translation cleavage follows an unusual pathway, termed non-hydrolytic serinolysis, in which the side chain hydroxyl group of the serine supplies its oxygen atom to form the C-terminus of the beta chain, while the remainder of the serine residue undergoes an oxidative deamination to produce ammonia and the pyruvoyl group blocking the N-terminus of the alpha chain.

It carries out the reaction S-adenosyl-L-methionine + H(+) = S-adenosyl 3-(methylsulfanyl)propylamine + CO2. It participates in amine and polyamine biosynthesis; S-adenosylmethioninamine biosynthesis; S-adenosylmethioninamine from S-adenosyl-L-methionine: step 1/1. Its function is as follows. Catalyzes the decarboxylation of S-adenosylmethionine to S-adenosylmethioninamine (dcAdoMet), the propylamine donor required for the synthesis of the polyamines spermine and spermidine from the diamine putrescine. The sequence is that of S-adenosylmethionine decarboxylase proenzyme from Pyrococcus horikoshii (strain ATCC 700860 / DSM 12428 / JCM 9974 / NBRC 100139 / OT-3).